A 111-amino-acid polypeptide reads, in one-letter code: Nucleoid-associated protein Cphamn1_1179 (111 aa).

This sequence belongs to the YbaB/EbfC family. In terms of assembly, homodimer.

The protein resides in the cytoplasm. It localises to the nucleoid. Binds to DNA and alters its conformation. May be involved in regulation of gene expression, nucleoid organization and DNA protection. The chain is Nucleoid-associated protein Cphamn1_1179 from Chlorobium phaeobacteroides (strain BS1).